The primary structure comprises 211 residues: Large ribosomal subunit protein uL3 (211 aa).

The tract at residues 135-155 is disordered; sequence THGNSLSHRAPGSIGQNQSPG. Gln-152 carries the post-translational modification N5-methylglutamine.

It belongs to the universal ribosomal protein uL3 family. Part of the 50S ribosomal subunit. Forms a cluster with proteins L14 and L19. In terms of processing, methylated by PrmB.

In terms of biological role, one of the primary rRNA binding proteins, it binds directly near the 3'-end of the 23S rRNA, where it nucleates assembly of the 50S subunit. In Pseudoalteromonas translucida (strain TAC 125), this protein is Large ribosomal subunit protein uL3.